The chain runs to 119 residues: Large ribosomal subunit protein bL19 (119 aa).

The protein belongs to the bacterial ribosomal protein bL19 family.

This protein is located at the 30S-50S ribosomal subunit interface and may play a role in the structure and function of the aminoacyl-tRNA binding site. The protein is Large ribosomal subunit protein bL19 of Arthrobacter sp. (strain FB24).